We begin with the raw amino-acid sequence, 318 residues long: tRNA pseudouridine synthase B (318 aa).

Catalysis depends on aspartate 47, which acts as the Nucleophile.

It belongs to the pseudouridine synthase TruB family. Type 1 subfamily.

It carries out the reaction uridine(55) in tRNA = pseudouridine(55) in tRNA. Functionally, responsible for synthesis of pseudouridine from uracil-55 in the psi GC loop of transfer RNAs. This is tRNA pseudouridine synthase B from Colwellia psychrerythraea (strain 34H / ATCC BAA-681) (Vibrio psychroerythus).